A 203-amino-acid polypeptide reads, in one-letter code: Thymidylate kinase (203 aa).

Residue G10–S17 participates in ATP binding.

It belongs to the thymidylate kinase family.

The catalysed reaction is dTMP + ATP = dTDP + ADP. Its function is as follows. Phosphorylation of dTMP to form dTDP in both de novo and salvage pathways of dTTP synthesis. This is Thymidylate kinase from Methylobacillus flagellatus (strain ATCC 51484 / DSM 6875 / VKM B-1610 / KT).